A 514-amino-acid chain; its full sequence is uncharacterized protein (514 aa).

Low complexity predominate over residues 1–15; that stretch reads MSSPRGASSMSSRSP. The tract at residues 1–22 is disordered; the sequence is MSSPRGASSMSSRSPVNLEPES.

This is an uncharacterized protein from Ictaluridae (bullhead catfishes).